Consider the following 197-residue polypeptide: Nucleoid occlusion factor SlmA (197 aa).

The 61-residue stretch at 7 to 67 (INRREHILQC…GLIEFIEESL (61 aa)) folds into the HTH tetR-type domain. The H-T-H motif DNA-binding region spans 30–49 (TTAKLAAEVGVSEAALYRHF). Residues 109-136 (DALLGENERLRSRISQLFAKIETHLKQI) adopt a coiled-coil conformation.

The protein belongs to the nucleoid occlusion factor SlmA family. In terms of assembly, homodimer. Interacts with FtsZ.

The protein localises to the cytoplasm. It is found in the nucleoid. Its function is as follows. Required for nucleoid occlusion (NO) phenomenon, which prevents Z-ring formation and cell division over the nucleoid. Acts as a DNA-associated cell division inhibitor that binds simultaneously chromosomal DNA and FtsZ, and disrupts the assembly of FtsZ polymers. SlmA-DNA-binding sequences (SBS) are dispersed on non-Ter regions of the chromosome, preventing FtsZ polymerization at these regions. This is Nucleoid occlusion factor SlmA from Shewanella halifaxensis (strain HAW-EB4).